Consider the following 395-residue polypeptide: Flap endonuclease 1 (395 aa).

The tract at residues 1–104 (MGIKHLYQVI…GELAKRFMRK (104 aa)) is N-domain. Asp34 provides a ligand contact to Mg(2+). DNA-binding residues include Arg47 and Arg70. Residues Asp86, Glu158, Glu160, Asp179, and Asp181 each contribute to the Mg(2+) site. The I-domain stretch occupies residues 122-253 (DVEKFSRRTV…NTALKLIRDH (132 aa)). Glu158 is a binding site for DNA. DNA is bound by residues Gly231 and Asp233. Position 233 (Asp233) interacts with Mg(2+). Residues 341–349 (QQSRLEGFF) form an interaction with PCNA region. Residues 357–389 (QEKATLKRKHEEKLELQKKKKKEEAKAKKEAKS) show a composition bias toward basic and acidic residues. The disordered stretch occupies residues 357–395 (QEKATLKRKHEEKLELQKKKKKEEAKAKKEAKSKPRGAV).

Belongs to the XPG/RAD2 endonuclease family. FEN1 subfamily. As to quaternary structure, interacts with PCNA. Three molecules of FEN1 bind to one PCNA trimer with each molecule binding to one PCNA monomer. PCNA stimulates the nuclease activity without altering cleavage specificity. Requires Mg(2+) as cofactor. In terms of processing, phosphorylated. Phosphorylation upon DNA damage induces relocalization to the nuclear plasma.

Its subcellular location is the nucleus. It is found in the nucleolus. The protein resides in the nucleoplasm. The protein localises to the mitochondrion. Functionally, structure-specific nuclease with 5'-flap endonuclease and 5'-3' exonuclease activities involved in DNA replication and repair. During DNA replication, cleaves the 5'-overhanging flap structure that is generated by displacement synthesis when DNA polymerase encounters the 5'-end of a downstream Okazaki fragment. It enters the flap from the 5'-end and then tracks to cleave the flap base, leaving a nick for ligation. Also involved in the long patch base excision repair (LP-BER) pathway, by cleaving within the apurinic/apyrimidinic (AP) site-terminated flap. Acts as a genome stabilization factor that prevents flaps from equilibrating into structures that lead to duplications and deletions. Also possesses 5'-3' exonuclease activity on nicked or gapped double-stranded DNA, and exhibits RNase H activity. Also involved in replication and repair of rDNA and in repairing mitochondrial DNA. The chain is Flap endonuclease 1 from Ajellomyces dermatitidis (strain ER-3 / ATCC MYA-2586) (Blastomyces dermatitidis).